The following is a 1677-amino-acid chain: Pentafunctional AROM polypeptide (1677 aa).

The tract at residues 1-394 is 3-dehydroquinate synthase; that stretch reads MAVADDTKAD…YEQKASIVED (394 aa). NAD(+)-binding positions include 50-52, 89-92, 120-122, and Asp-125; these read DDN, ETSK, and GGV. Arg-136 lines the 7-phospho-2-dehydro-3-deoxy-D-arabino-heptonate pocket. NAD(+) is bound at residue 145-146; sequence TT. 2 residues coordinate 7-phospho-2-dehydro-3-deoxy-D-arabino-heptonate: Asp-152 and Lys-158. Lys-167 contributes to the NAD(+) binding site. Asn-168 serves as a coordination point for 7-phospho-2-dehydro-3-deoxy-D-arabino-heptonate. NAD(+) is bound by residues 185 to 188 and Asn-196; that span reads YLET. Glu-200 contacts Zn(2+). 7-phospho-2-dehydro-3-deoxy-D-arabino-heptonate contacts are provided by residues 200–203 and Lys-260; that span reads EVVK. Residue Glu-270 is the Proton acceptor; for 3-dehydroquinate synthase activity of the active site. Residues 274-278 and His-281 contribute to the 7-phospho-2-dehydro-3-deoxy-D-arabino-heptonate site; that span reads RNLVN. His-281 contacts Zn(2+). Catalysis depends on His-285, which acts as the Proton acceptor; for 3-dehydroquinate synthase activity. His-297 and Lys-366 together coordinate 7-phospho-2-dehydro-3-deoxy-D-arabino-heptonate. His-297 is a Zn(2+) binding site. The segment at 407-858 is EPSP synthase; the sequence is VVPSIPTGNV…WDDLENKIGI (452 aa). The active-site For EPSP synthase activity is Cys-840. Residues 885–1113 form a shikimate kinase region; that stretch reads NSSILLIGMR…GQQRRTYFLC (229 aa). 892–899 contributes to the ATP binding site; sequence GMRGTGKT. Positions 1114-1341 are 3-dehydroquinase; the sequence is LTYPDVRHAF…AAPGQLSFKQ (228 aa). The Proton acceptor; for 3-dehydroquinate dehydratase activity role is filled by His-1243. Lys-1271 serves as the catalytic Schiff-base intermediate with substrate; for 3-dehydroquinate dehydratase activity. A shikimate dehydrogenase region spans residues 1354-1677; that stretch reads SKHFHLFGTP…TRVWEKYGEV (324 aa).

In the N-terminal section; belongs to the sugar phosphate cyclases superfamily. Dehydroquinate synthase family. The protein in the 2nd section; belongs to the EPSP synthase family. It in the 3rd section; belongs to the shikimate kinase family. This sequence in the 4th section; belongs to the type-I 3-dehydroquinase family. In the C-terminal section; belongs to the shikimate dehydrogenase family. In terms of assembly, homodimer. The cofactor is Zn(2+).

It is found in the cytoplasm. It catalyses the reaction 7-phospho-2-dehydro-3-deoxy-D-arabino-heptonate = 3-dehydroquinate + phosphate. It carries out the reaction 3-dehydroquinate = 3-dehydroshikimate + H2O. The enzyme catalyses shikimate + NADP(+) = 3-dehydroshikimate + NADPH + H(+). The catalysed reaction is shikimate + ATP = 3-phosphoshikimate + ADP + H(+). It catalyses the reaction 3-phosphoshikimate + phosphoenolpyruvate = 5-O-(1-carboxyvinyl)-3-phosphoshikimate + phosphate. It functions in the pathway metabolic intermediate biosynthesis; chorismate biosynthesis; chorismate from D-erythrose 4-phosphate and phosphoenolpyruvate: step 2/7. It participates in metabolic intermediate biosynthesis; chorismate biosynthesis; chorismate from D-erythrose 4-phosphate and phosphoenolpyruvate: step 3/7. Its pathway is metabolic intermediate biosynthesis; chorismate biosynthesis; chorismate from D-erythrose 4-phosphate and phosphoenolpyruvate: step 4/7. The protein operates within metabolic intermediate biosynthesis; chorismate biosynthesis; chorismate from D-erythrose 4-phosphate and phosphoenolpyruvate: step 5/7. It functions in the pathway metabolic intermediate biosynthesis; chorismate biosynthesis; chorismate from D-erythrose 4-phosphate and phosphoenolpyruvate: step 6/7. In terms of biological role, the AROM polypeptide catalyzes 5 consecutive enzymatic reactions in prechorismate polyaromatic amino acid biosynthesis. The sequence is that of Pentafunctional AROM polypeptide from Coprinopsis cinerea (strain Okayama-7 / 130 / ATCC MYA-4618 / FGSC 9003) (Inky cap fungus).